Here is a 338-residue protein sequence, read N- to C-terminus: Aspartate-semialdehyde dehydrogenase (338 aa).

NADP(+)-binding positions include serine 13–valine 16 and arginine 41–serine 42. Position 101 (arginine 101) interacts with phosphate. Cysteine 132 functions as the Acyl-thioester intermediate in the catalytic mechanism. Position 159 (glutamine 159) interacts with substrate. Residue serine 162–glycine 163 coordinates NADP(+). Position 216 (lysine 216) interacts with phosphate. Residue arginine 238 participates in substrate binding. Histidine 245 acts as the Proton acceptor in catalysis. Asparagine 317 lines the NADP(+) pocket.

Belongs to the aspartate-semialdehyde dehydrogenase family. As to quaternary structure, homodimer.

It catalyses the reaction L-aspartate 4-semialdehyde + phosphate + NADP(+) = 4-phospho-L-aspartate + NADPH + H(+). It participates in amino-acid biosynthesis; L-lysine biosynthesis via DAP pathway; (S)-tetrahydrodipicolinate from L-aspartate: step 2/4. The protein operates within amino-acid biosynthesis; L-methionine biosynthesis via de novo pathway; L-homoserine from L-aspartate: step 2/3. It functions in the pathway amino-acid biosynthesis; L-threonine biosynthesis; L-threonine from L-aspartate: step 2/5. Catalyzes the NADPH-dependent formation of L-aspartate-semialdehyde (L-ASA) by the reductive dephosphorylation of L-aspartyl-4-phosphate. The chain is Aspartate-semialdehyde dehydrogenase from Shewanella violacea (strain JCM 10179 / CIP 106290 / LMG 19151 / DSS12).